A 170-amino-acid chain; its full sequence is Acireductone dioxygenase (170 aa).

Positions 99, 101, 105, and 144 each coordinate Fe(2+). Residues H99, H101, E105, and H144 each contribute to the Ni(2+) site.

This sequence belongs to the acireductone dioxygenase (ARD) family. As to quaternary structure, monomer. Fe(2+) is required as a cofactor. The cofactor is Ni(2+).

It catalyses the reaction 1,2-dihydroxy-5-(methylsulfanyl)pent-1-en-3-one + O2 = 3-(methylsulfanyl)propanoate + CO + formate + 2 H(+). The catalysed reaction is 1,2-dihydroxy-5-(methylsulfanyl)pent-1-en-3-one + O2 = 4-methylsulfanyl-2-oxobutanoate + formate + 2 H(+). It participates in amino-acid biosynthesis; L-methionine biosynthesis via salvage pathway; L-methionine from S-methyl-5-thio-alpha-D-ribose 1-phosphate: step 5/6. Functionally, catalyzes 2 different reactions between oxygen and the acireductone 1,2-dihydroxy-3-keto-5-methylthiopentene (DHK-MTPene) depending upon the metal bound in the active site. Fe-containing acireductone dioxygenase (Fe-ARD) produces formate and 2-keto-4-methylthiobutyrate (KMTB), the alpha-ketoacid precursor of methionine in the methionine recycle pathway. Ni-containing acireductone dioxygenase (Ni-ARD) produces methylthiopropionate, carbon monoxide and formate, and does not lie on the methionine recycle pathway. This is Acireductone dioxygenase from Bacillus thuringiensis (strain Al Hakam).